The sequence spans 127 residues: uncharacterized protein (127 aa).

The signal sequence occupies residues 1–16; sequence MIKKIIFGIAILLSTS. Cysteine 17 carries N-palmitoyl cysteine lipidation. Cysteine 17 carries S-diacylglycerol cysteine lipidation. Residues 56–101 are a coiled coil; the sequence is EVREEIQKYRVAIVKINKKKRELYNRLSKEAQNFLAEQQKYKQKLS. Polar residues predominate over residues 107–118; sequence VENDQKNNTADS. Positions 107-127 are disordered; sequence VENDQKNNTADSNDNKSKDTK.

It is found in the cell membrane. This is an uncharacterized protein from Rickettsia conorii (strain ATCC VR-613 / Malish 7).